The sequence spans 701 residues: Interleukin-1 receptor accessory protein-like 1-A (701 aa).

The first 19 residues, 1 to 19, serve as a signal peptide directing secretion; that stretch reads MTALNPVLFLLCGVSVSLS. The Extracellular segment spans residues 20–361; that stretch reads LKVVSKRGSV…IGKRVELMYT (342 aa). In terms of domain architecture, Ig-like C2-type 1 spans 33–133; the sequence is TDWSVDYLKY…RNSTFCMKVS (101 aa). Cysteines 54 and 121 form a disulfide. N-linked (GlcNAc...) asparagine glycosylation is found at asparagine 64, asparagine 125, asparagine 141, asparagine 216, asparagine 267, and asparagine 334. Ig-like C2-type domains are found at residues 146 to 235 and 245 to 353; these read CYNS…TYLS and PRIL…VQIG. Cysteine 167 and cysteine 219 are disulfide-bonded. The cysteines at positions 270 and 337 are disulfide-linked. Residues 362–382 form a helical membrane-spanning segment; the sequence is VELAGGLGAILLLLALLLSVY. The Cytoplasmic segment spans residues 383-701; sequence KCYRIELLLC…RETSISSVIW (319 aa). The TIR domain maps to 407-563; sequence KEYDAYLSYS…RFWKQLRYTM (157 aa). Glutamate 495 is an active-site residue. The required for synaptic vesicle accumulation during synaptogenesis stretch occupies residues 568–701; sequence PQQTITNHAL…RETSISSVIW (134 aa).

It belongs to the interleukin-1 receptor family.

It localises to the cell membrane. The protein resides in the cytoplasm. It carries out the reaction NAD(+) + H2O = ADP-D-ribose + nicotinamide + H(+). May regulate secretion and presynaptic differentiation through inhibition of the activity of N-type voltage-gated calcium channel. During presynaptic differentiation may regulate both synaptic vesicle accumulation in axon terminals and subsequent axon terminal remodeling. This is Interleukin-1 receptor accessory protein-like 1-A (il1rapl1a) from Danio rerio (Zebrafish).